Reading from the N-terminus, the 214-residue chain is 3-demethoxyubiquinol 3-hydroxylase (214 aa).

Residues Glu-63, Glu-93, His-96, Glu-145, Glu-177, and His-180 each coordinate Fe cation.

The protein belongs to the COQ7 family. Fe cation serves as cofactor.

It is found in the cell membrane. It catalyses the reaction a 5-methoxy-2-methyl-3-(all-trans-polyprenyl)benzene-1,4-diol + AH2 + O2 = a 3-demethylubiquinol + A + H2O. It participates in cofactor biosynthesis; ubiquinone biosynthesis. Catalyzes the hydroxylation of 2-nonaprenyl-3-methyl-6-methoxy-1,4-benzoquinol during ubiquinone biosynthesis. The sequence is that of 3-demethoxyubiquinol 3-hydroxylase from Psychrobacter cryohalolentis (strain ATCC BAA-1226 / DSM 17306 / VKM B-2378 / K5).